Consider the following 505-residue polypeptide: Bifunctional pantoate ligase/cytidylate kinase (505 aa).

The pantoate--beta-alanine ligase stretch occupies residues 1-268; it reads MHQWRKHQQS…CGETRLIDHT (268 aa). 18-25 is an ATP binding site; sequence MGALHRGH. The active-site Proton donor is His25. Gln53 is a binding site for (R)-pantoate. Beta-alanine is bound at residue Gln53. 142 to 145 contacts ATP; sequence GEKD. Gln148 contributes to the (R)-pantoate binding site. Residues Val171 and 179-182 contribute to the ATP site; that span reads CSSR. Residues 269 to 505 form a cytidylate kinase region; it reads FLMSRQPIVA…PEEVWPTAGR (237 aa).

This sequence in the N-terminal section; belongs to the pantothenate synthetase family. In the C-terminal section; belongs to the cytidylate kinase family. Type 1 subfamily.

It localises to the cytoplasm. It carries out the reaction (R)-pantoate + beta-alanine + ATP = (R)-pantothenate + AMP + diphosphate + H(+). It catalyses the reaction CMP + ATP = CDP + ADP. The enzyme catalyses dCMP + ATP = dCDP + ADP. Its pathway is cofactor biosynthesis; (R)-pantothenate biosynthesis; (R)-pantothenate from (R)-pantoate and beta-alanine: step 1/1. Functionally, catalyzes the condensation of pantoate with beta-alanine in an ATP-dependent reaction via a pantoyl-adenylate intermediate. In terms of biological role, catalyzes the transfer of a phosphate group from ATP to either CMP or dCMP to form CDP or dCDP and ADP, respectively. The sequence is that of Bifunctional pantoate ligase/cytidylate kinase from Prochlorococcus marinus (strain MIT 9313).